The chain runs to 136 residues: Large ribosomal subunit protein uL16 (136 aa).

This sequence belongs to the universal ribosomal protein uL16 family. As to quaternary structure, part of the 50S ribosomal subunit.

Functionally, binds 23S rRNA and is also seen to make contacts with the A and possibly P site tRNAs. This is Large ribosomal subunit protein uL16 from Shewanella baltica (strain OS155 / ATCC BAA-1091).